A 901-amino-acid chain; its full sequence is Alpha-actinin-3 (901 aa).

Methionine 1 carries the N-acetylmethionine modification. The tract at residues 1–261 (MMMVLQPEGL…IMTYVSCFYH (261 aa)) is actin-binding. Calponin-homology (CH) domains are found at residues 45–149 (KQQR…LRFA) and 158–264 (TSAK…HAFA). Spectrin repeat units lie at residues 288–398 (KLME…WLLS), 408–513 (HLAE…ALER), 523–634 (QLQL…MLQE), and 644–747 (RLRR…EVEN). 2 consecutive EF-hand domains span residues 760-795 (EQLN…MGYD) and 796-831 (LGEV…ETAE). Ca(2+) is bound by residues aspartate 773, asparagine 777, methionine 779, aspartate 784, aspartate 809, and asparagine 811.

The protein belongs to the alpha-actinin family. In terms of assembly, homodimer; antiparallel. Also forms heterodimers with ACTN2. Interacts with MYOZ1.

Functionally, F-actin cross-linking protein which is thought to anchor actin to a variety of intracellular structures. This is a bundling protein. This chain is Alpha-actinin-3 (ACTN3), found in Bos taurus (Bovine).